The following is a 95-amino-acid chain: F(1)-ATPase inhibitor IF(1), mitochondrial (95 aa).

The transit peptide at 1-25 (MLRTTVSKLARPTVSRAFATTSRAL) directs the protein to the mitochondrion. 2 disordered regions span residues 20 to 48 (TTSR…REKA) and 76 to 95 (LKTL…GERN).

The protein belongs to the ATPase inhibitor family. In terms of assembly, associates with the mitochondrial small ribosomal subunit (mt-SSU). IF(1) coiled-coil forms a helical bundle with the C-terminal extension of uS17m and also binds to mS27 in the mtSSU tail. Since the C-terminal extension of uS17m stabilizing the IF(1) on the mt-SSU is specific to N.crassa, IF(1) binding might also be specific.

The protein localises to the mitochondrion. Its function is as follows. Endogenous F(1)F(0)-ATPase inhibitor limiting ATP depletion when the mitochondrial membrane potential falls below a threshold and the F(1)F(0)-ATP synthase starts hydrolyzing ATP to pump protons out of the mitochondrial matrix. Required to avoid the consumption of cellular ATP when the F(1)F(0)-ATP synthase enzyme acts as an ATP hydrolase. Functions through inserting its N-terminal part into the catalytically active F1-ATPase, thereby blocking its rotational movement and subsequently the ATP hydrolase activity. This Neurospora crassa (strain ATCC 24698 / 74-OR23-1A / CBS 708.71 / DSM 1257 / FGSC 987) protein is F(1)-ATPase inhibitor IF(1), mitochondrial (inh1).